A 999-amino-acid chain; its full sequence is Hypoxia up-regulated protein 1 (999 aa).

Positions 1–32 (MADKVRRQRPRRRVCWALVAVLLADLLALSDT) are cleaved as a signal peptide. 3 N-linked (GlcNAc...) asparagine glycosylation sites follow: asparagine 155, asparagine 222, and asparagine 515. Phosphoserine is present on serine 567. Residues 578–694 (GNTISSLFGG…KKQKPARKRR (117 aa)) form a disordered region. Asparagine 596 carries an N-linked (GlcNAc...) asparagine glycan. Composition is skewed to basic and acidic residues over residues 611–626 (GSKDEPGEQVELKEEA) and 641–672 (PKGDATPEGEKATEKENGDKSEAQKPSEKAEA). N-linked (GlcNAc...) asparagine glycosylation is found at asparagine 830, asparagine 862, and asparagine 869. An N6-acetyllysine modification is found at lysine 883. The disordered stretch occupies residues 909-999 (AKFTKPRPRP…QKRPLKNDEL (91 aa)). Residues asparagine 922 and asparagine 931 are each glycosylated (N-linked (GlcNAc...) asparagine). The short motif at 996-999 (NDEL) is the Prevents secretion from ER element.

This sequence belongs to the heat shock protein 70 family. As to quaternary structure, part of a large chaperone multiprotein complex comprising DNAJB11, HSP90B1, HSPA5, HYOU, PDIA2, PDIA4, PDIA6, PPIB, SDF2L1, UGGT1 and very small amounts of ERP29, but not, or at very low levels, CALR nor CANX. As to expression, highly expressed in tissues that contain well-developed endoplasmic reticulum and synthesize large amounts of secretory proteins. Highly expressed in liver and pancreas and lower expression in brain and kidney. Also expressed in macrophages within aortic atherosclerotic plaques, and in breast cancers.

Its subcellular location is the endoplasmic reticulum lumen. Its function is as follows. Has a pivotal role in cytoprotective cellular mechanisms triggered by oxygen deprivation. Promotes HSPA5/BiP-mediated ATP nucleotide exchange and thereby activates the unfolded protein response (UPR) pathway in the presence of endoplasmic reticulum stress. May play a role as a molecular chaperone and participate in protein folding. This Homo sapiens (Human) protein is Hypoxia up-regulated protein 1 (HYOU1).